Consider the following 78-residue polypeptide: MPPLPGAELVHNPLQLYRYLLRCCKLLPTESLQHYYRHSVKQSFRVHADEDDPERIQQIIKRAIEDADWVLNKYKKES.

Belongs to the complex I LYR family. LYRM9 subfamily.

The polypeptide is LYR motif-containing protein 9 (lyrm9) (Xenopus tropicalis (Western clawed frog)).